The sequence spans 793 residues: Probable phosphoketolase (793 aa).

It belongs to the XFP family. Thiamine diphosphate is required as a cofactor.

This Gloeobacter violaceus (strain ATCC 29082 / PCC 7421) protein is Probable phosphoketolase.